The chain runs to 199 residues: Pre T-cell antigen receptor alpha (199 aa).

The first 16 residues, 1-16 (MARTWLLLLLGVRCQA), serve as a signal peptide directing secretion. Residues 17-146 (LPSGIAGTPF…PEPLGGTQRQ (130 aa)) are Extracellular-facing. An intrachain disulfide couples cysteine 47 to cysteine 107. Asparagine 67 and asparagine 117 each carry an N-linked (GlcNAc...) asparagine glycan. Residues 147-167 (VLWLSLLRLLLFKLLLLDVLL) traverse the membrane as a helical segment. Over 168-199 (TCSHLRLHVLAGQHLQPPPSRKSLPPTHRIWT) the chain is Cytoplasmic.

Heterodimer with TCRB; disulfide linked. This heterodimer assembles with CD3 proteins into a signaling-competent pre-T-cell receptor complex. Interacts with RHBDD1. In terms of tissue distribution, isoform 1 is expressed at higher levels than isoform 2 in the thymus while only isoform 2 is expressed in polyclonal beta-only cells. Isoform 1 shows a predominant expression in immature thymocytes.

It is found in the membrane. The protein localises to the cell membrane. Its function is as follows. Component of the pre-T-cell receptor complex (composed of PTCRA, TCRB and the CD3 complex) that plays a crucial role in early T-cell development, particularly alpha-beta T cell differentiation. Isoform 1 acts to retain most TCRB intracellularly, while isoform 2 permits higher levels of cell surface TCRB expression and facilitates signaling from the CD3-TCRB complex. The polypeptide is Pre T-cell antigen receptor alpha (Mus musculus (Mouse)).